The primary structure comprises 33 residues: Beta-theraphotoxin-Cm1b (33 aa).

Cystine bridges form between C2–C17, C9–C22, and C16–C29. L33 carries the leucine amide modification.

Belongs to the neurotoxin 10 (Hwtx-1) family. 04 (CcoTx1) subfamily. In terms of tissue distribution, expressed by the venom gland.

Its subcellular location is the secreted. Its function is as follows. Inhibits several voltage-gated sodium channels and only one voltage-gated calcium channel (Cav2.2/CACNA1B (IC(50)=1.1 uM) and Nav1.2/SCN2A (IC(50)=3.7-80 nM), Nav1.3/SCN3A (IC(50)=88-5570 nM), Nav1.1/SCN1A (IC(50)=170-407 nM), Nav1.7/SCN9A (IC(50)=95.5-230 nM), Nav1.6/SCN6A (IC(50)=49.9-3990 nM), Nav1.4/SCN4A (IC(50)=113-400 nM or &gt;10 uM), Nav1.5/SCN5A (IC(50)=1524-1634 nM or &gt;10 uM)). The toxin acts by shifting the voltage dependence of channel activation to more depolarized potentials and by blocking the inward component of the sodium current. It shows moderate affinity for lipid bilayers without cholesterol and high affinity for lipid bilayers containing cholesterol. In vivo, this toxin causes general ataxia, lack of response to stimuli, and semiparalysis. After a few minutes, the mice are unable to stand, and breathing is reduced in rhythm and intensity. Symptoms gradually increase with progressive slowing of breathing and flaccid paralysis; death occurred within 10 to 20 minutes post injection. Animals remain totally flaccid, and no symptoms of excitatory neurotoxicity are observed. This is Beta-theraphotoxin-Cm1b from Ceratogyrus marshalli (Straighthorned baboon tarantula).